The sequence spans 180 residues: MQSTLPSLFIVGPMGAGKTTVGKLLAKHLGRDFIDSDHYICEQTGADIPWIFEKEGETGFREREARAIAELTALPNVVLATGGGVVMQPQNRDNLTKQGITIYLRANVDVQLKRTAKDKSRPLLNTPNPRAVLQSLFDVRDPLYREVADIVVETGDGYPRYMLKKIIEALKQHYPEHMKS.

15–20 (GAGKTT) contacts ATP. T19 is a Mg(2+) binding site. 3 residues coordinate substrate: D37, R61, and G83. R121 contacts ATP. R140 serves as a coordination point for substrate.

This sequence belongs to the shikimate kinase family. As to quaternary structure, monomer. Mg(2+) is required as a cofactor.

Its subcellular location is the cytoplasm. The catalysed reaction is shikimate + ATP = 3-phosphoshikimate + ADP + H(+). It participates in metabolic intermediate biosynthesis; chorismate biosynthesis; chorismate from D-erythrose 4-phosphate and phosphoenolpyruvate: step 5/7. Its function is as follows. Catalyzes the specific phosphorylation of the 3-hydroxyl group of shikimic acid using ATP as a cosubstrate. The sequence is that of Shikimate kinase from Psychrobacter sp. (strain PRwf-1).